The following is a 361-amino-acid chain: Phosphoserine aminotransferase (361 aa).

An L-glutamate-binding site is contributed by Arg42. Pyridoxal 5'-phosphate-binding positions include 76–77 (AT), Trp102, Thr152, Asp172, and Gln195. Position 196 is an N6-(pyridoxal phosphate)lysine (Lys196). 237 to 238 (NT) serves as a coordination point for pyridoxal 5'-phosphate.

The protein belongs to the class-V pyridoxal-phosphate-dependent aminotransferase family. SerC subfamily. As to quaternary structure, homodimer. The cofactor is pyridoxal 5'-phosphate.

Its subcellular location is the cytoplasm. The catalysed reaction is O-phospho-L-serine + 2-oxoglutarate = 3-phosphooxypyruvate + L-glutamate. It catalyses the reaction 4-(phosphooxy)-L-threonine + 2-oxoglutarate = (R)-3-hydroxy-2-oxo-4-phosphooxybutanoate + L-glutamate. The protein operates within amino-acid biosynthesis; L-serine biosynthesis; L-serine from 3-phospho-D-glycerate: step 2/3. Its pathway is cofactor biosynthesis; pyridoxine 5'-phosphate biosynthesis; pyridoxine 5'-phosphate from D-erythrose 4-phosphate: step 3/5. In terms of biological role, catalyzes the reversible conversion of 3-phosphohydroxypyruvate to phosphoserine and of 3-hydroxy-2-oxo-4-phosphonooxybutanoate to phosphohydroxythreonine. This chain is Phosphoserine aminotransferase, found in Xanthomonas campestris pv. campestris (strain B100).